The primary structure comprises 354 residues: Kelch domain-containing protein 8B (354 aa).

Kelch repeat units follow at residues Met1–Gly31, His32–Lys79, Val81–Gly127, Met128–Asn175, Lys176–Gly222, Val224–Gly281, Asn282–Pro329, and Leu331–Val354.

The protein localises to the cytoplasm. Its subcellular location is the midbody. In terms of biological role, involved in pinching off the separated nuclei at the cleavage furrow and in cytokinesis. Required for mitotic integrity and maintenance of chromosomal stability. Protects cells against mitotic errors, centrosomal amplification, micronucleus formation and aneuploidy. Plays a key role of midbody function involving abscission of the daughter cells during cytokinesis and appropriate chromosomal and nuclear segregation into the daughter cells. The chain is Kelch domain-containing protein 8B (Klhdc8b) from Mus musculus (Mouse).